The primary structure comprises 154 residues: Interleukin-2 (154 aa).

Positions 1–20 (MYRMQLLSCIALSLALVTNS) are cleaved as a signal peptide. Thr23 carries an O-linked (GalNAc...) threonine glycan. Cysteines 78 and 126 form a disulfide.

The protein belongs to the IL-2 family.

Its subcellular location is the secreted. Functionally, cytokine produced by activated CD4-positive helper T-cells and to a lesser extend activated CD8-positive T-cells and natural killer (NK) cells that plays pivotal roles in the immune response and tolerance. Binds to a receptor complex composed of either the high-affinity trimeric IL-2R (IL2RA/CD25, IL2RB/CD122 and IL2RG/CD132) or the low-affinity dimeric IL-2R (IL2RB and IL2RG). Interaction with the receptor leads to oligomerization and conformation changes in the IL-2R subunits resulting in downstream signaling starting with phosphorylation of JAK1 and JAK3. In turn, JAK1 and JAK3 phosphorylate the receptor to form a docking site leading to the phosphorylation of several substrates including STAT5. This process leads to activation of several pathways including STAT, phosphoinositide-3-kinase/PI3K and mitogen-activated protein kinase/MAPK pathways. Functions as a T-cell growth factor and can increase NK-cell cytolytic activity as well. Promotes strong proliferation of activated B-cells and subsequently immunoglobulin production. Plays a pivotal role in regulating the adaptive immune system by controlling the survival and proliferation of regulatory T-cells, which are required for the maintenance of immune tolerance. Moreover, participates in the differentiation and homeostasis of effector T-cell subsets, including Th1, Th2, Th17 as well as memory CD8-positive T-cells. The protein is Interleukin-2 (IL2) of Macaca mulatta (Rhesus macaque).